Here is a 424-residue protein sequence, read N- to C-terminus: Phosphomethylpyrimidine synthase (424 aa).

Substrate contacts are provided by residues Asn-66, Met-95, Tyr-124, His-163, 185–187, 226–229, and Glu-265; these read SRG and DGMR. A Zn(2+)-binding site is contributed by His-269. Substrate is bound at residue Phe-292. His-333 provides a ligand contact to Zn(2+). [4Fe-4S] cluster contacts are provided by Cys-408, Cys-411, and Cys-415.

This sequence belongs to the ThiC family. [4Fe-4S] cluster serves as cofactor.

It carries out the reaction 5-amino-1-(5-phospho-beta-D-ribosyl)imidazole + S-adenosyl-L-methionine = 4-amino-2-methyl-5-(phosphooxymethyl)pyrimidine + CO + 5'-deoxyadenosine + formate + L-methionine + 3 H(+). It functions in the pathway cofactor biosynthesis; thiamine diphosphate biosynthesis. In terms of biological role, catalyzes the synthesis of the hydroxymethylpyrimidine phosphate (HMP-P) moiety of thiamine from aminoimidazole ribotide (AIR) in a radical S-adenosyl-L-methionine (SAM)-dependent reaction. The protein is Phosphomethylpyrimidine synthase of Thermotoga petrophila (strain ATCC BAA-488 / DSM 13995 / JCM 10881 / RKU-1).